Here is a 367-residue protein sequence, read N- to C-terminus: tRNA/tmRNA (uracil-C(5))-methyltransferase (367 aa).

Gln190, Tyr218, Asn223, Glu239, and Asp299 together coordinate S-adenosyl-L-methionine. Residue Cys324 is the Nucleophile of the active site. Glu358 acts as the Proton acceptor in catalysis.

It belongs to the class I-like SAM-binding methyltransferase superfamily. RNA M5U methyltransferase family. TrmA subfamily.

It carries out the reaction uridine(54) in tRNA + S-adenosyl-L-methionine = 5-methyluridine(54) in tRNA + S-adenosyl-L-homocysteine + H(+). The enzyme catalyses uridine(341) in tmRNA + S-adenosyl-L-methionine = 5-methyluridine(341) in tmRNA + S-adenosyl-L-homocysteine + H(+). In terms of biological role, dual-specificity methyltransferase that catalyzes the formation of 5-methyluridine at position 54 (m5U54) in all tRNAs, and that of position 341 (m5U341) in tmRNA (transfer-mRNA). The protein is tRNA/tmRNA (uracil-C(5))-methyltransferase of Yersinia enterocolitica serotype O:8 / biotype 1B (strain NCTC 13174 / 8081).